The chain runs to 159 residues: Small ribosomal subunit protein uS9 (159 aa).

It belongs to the universal ribosomal protein uS9 family.

The protein is Small ribosomal subunit protein uS9 of Bradyrhizobium diazoefficiens (strain JCM 10833 / BCRC 13528 / IAM 13628 / NBRC 14792 / USDA 110).